Here is a 535-residue protein sequence, read N- to C-terminus: Expansin-like protein 9 (535 aa).

Positions 1-25 are cleaved as a signal peptide; sequence MKINKNNYFKIIIFIIYVIINLINA. Asn-24 carries N-linked (GlcNAc...) asparagine glycosylation. Residues 26–514 lie on the Extracellular side of the membrane; the sequence is SDNVKLSNCG…DNSSNILLFS (489 aa). The 114-residue stretch at 31–144 folds into the Expansin-like EG45 domain; the sequence is LSNCGQARAE…QEVSCGFLGN (114 aa). 2 cysteine pairs are disulfide-bonded: Cys-34–Cys-75 and Cys-78–Cys-139. Asn-122, Asn-257, and Asn-292 each carry an N-linked (GlcNAc...) asparagine glycan. The tract at residues 459 to 487 is disordered; sequence VDGSSNDDDGTGGTGGGASNKVGKRVDGE. Residue Asn-506 is glycosylated (N-linked (GlcNAc...) asparagine). Residues 515 to 535 traverse the membrane as a helical segment; it reads FNITLTFLLLSLIINILLLLF.

The protein belongs to the expansin family. Expansin A subfamily.

Its subcellular location is the membrane. Its function is as follows. May serve to lubricate the movement of the cellulose microfibrils during cell growth and wall extension and/or may serve to maintain the fluid state of the slug cell wall. The sequence is that of Expansin-like protein 9 (expl9) from Dictyostelium discoideum (Social amoeba).